A 292-amino-acid chain; its full sequence is 4-hydroxy-tetrahydrodipicolinate synthase (292 aa).

Residue threonine 45 coordinates pyruvate. Tyrosine 133 serves as the catalytic Proton donor/acceptor. The active-site Schiff-base intermediate with substrate is lysine 162. Residue isoleucine 204 participates in pyruvate binding.

It belongs to the DapA family. In terms of assembly, homotetramer; dimer of dimers.

It is found in the cytoplasm. The enzyme catalyses L-aspartate 4-semialdehyde + pyruvate = (2S,4S)-4-hydroxy-2,3,4,5-tetrahydrodipicolinate + H2O + H(+). Its pathway is amino-acid biosynthesis; L-lysine biosynthesis via DAP pathway; (S)-tetrahydrodipicolinate from L-aspartate: step 3/4. In terms of biological role, catalyzes the condensation of (S)-aspartate-beta-semialdehyde [(S)-ASA] and pyruvate to 4-hydroxy-tetrahydrodipicolinate (HTPA). The polypeptide is 4-hydroxy-tetrahydrodipicolinate synthase (Nitratidesulfovibrio vulgaris (strain ATCC 29579 / DSM 644 / CCUG 34227 / NCIMB 8303 / VKM B-1760 / Hildenborough) (Desulfovibrio vulgaris)).